Here is a 284-residue protein sequence, read N- to C-terminus: Esterase alnB (284 aa).

Active-site charge relay system residues include Ser93, Asp226, and His255.

This sequence belongs to the LovG family.

Its pathway is polyketide biosynthesis. Functionally, esterase; part of the gene cluster that mediates the biosynthesis of asperlin, a polyketide showing anti-inflammatory, antitumor and antibiotic activities. The first step of the asperlin biosynthesis is the production of the intermediate 2,4,6-octatrienoic acid by the highly redusing polyketide synthase alnA with cleavage of the PKS product by the esterase alnB. 2,4,6-octatrienoic acid is further converted to asperlin via several steps involving the remaining enzymes from the cluster. In Emericella nidulans (strain FGSC A4 / ATCC 38163 / CBS 112.46 / NRRL 194 / M139) (Aspergillus nidulans), this protein is Esterase alnB.